The primary structure comprises 2885 residues: E3 ubiquitin-protein ligase hyd (2885 aa).

A disordered region spans residues 83–138 (SDAKCSTSGGSGTASASKAPSSSRPMARSRARLLRATGRSNSTGQGSGSRSTGVII). 2 stretches are compositionally biased toward low complexity: residues 95-108 (TASA…SRPM) and 116-138 (LRAT…GVII). The UBA domain maps to 154–196 (YVPEELISQAEVVLQGKSRNLIIRELQRTNLDVNLAVNNLLSR). The segment covering 266–276 (ANANAADSNQS) has biased composition (low complexity). Disordered regions lie at residues 266–291 (ANAN…TGNS), 580–664 (NNLN…GRKD), and 711–731 (AATS…KEDD). 2 stretches are compositionally biased toward polar residues: residues 277–291 (TTRS…TGNS) and 598–615 (AMPS…SNSK). S628 and S631 each carry phosphoserine. Positions 650–664 (TTKEDSNAPQEGRKD) are enriched in basic and acidic residues. Over residues 711–722 (AATSSTSNTAST) the composition is skewed to low complexity. At S967 the chain carries Phosphoserine. Residues 1008–1032 (ASSSNENSSFATMSSSAAGSASSTS) are compositionally biased toward low complexity. The disordered stretch occupies residues 1008–1035 (ASSSNENSSFATMSSSAAGSASSTSRDN). The UBR-type zinc-finger motif lies at 1217–1285 (DTCSFTWTGA…EKCKCKALIA (69 aa)). S1362 carries the phosphoserine modification. The tract at residues 1642–1761 (NEDGMQDDES…IRSRDTARSS (120 aa)) is disordered. Positions 1669 to 1681 (NQSNQEVQRSVQA) are enriched in polar residues. The span at 1696–1721 (LEDESGDSSAQEEDGSEDGESDDQSD) shows a compositional bias: acidic residues. The segment covering 1735–1749 (TNSNARSDLAPQTMQ) has biased composition (polar residues). S2037 is modified (phosphoserine). Residues 2124–2143 (IDSSKTGDGNVTNKAEGSTD) are disordered. S2183 carries the phosphoserine modification. The tract at residues 2473–2492 (NLDARPYTPPNSSDNATPES) is disordered. Polar residues predominate over residues 2482-2492 (PNSSDNATPES). In terms of domain architecture, PABC spans 2484–2561 (SSDNATPESL…AIEIITFKQK (78 aa)). S2574 carries the post-translational modification Phosphoserine. One can recognise an HECT domain in the interval 2782-2885 (FNDESSEGPD…AIKSKNFGFV (104 aa)). C2854 functions as the Glycyl thioester intermediate in the catalytic mechanism.

Belongs to the UBR5 family.

Its subcellular location is the nucleus. It is found in the cytoplasm. The catalysed reaction is S-ubiquitinyl-[E2 ubiquitin-conjugating enzyme]-L-cysteine + [acceptor protein]-L-lysine = [E2 ubiquitin-conjugating enzyme]-L-cysteine + N(6)-ubiquitinyl-[acceptor protein]-L-lysine.. Its pathway is protein modification; protein ubiquitination. Functionally, E3 ubiquitin-protein ligase which accepts ubiquitin from an E2 ubiquitin-conjugating enzyme in the form of a thioester and then directly transfers the ubiquitin to targeted substrate. Required for regulation of cell proliferation in imaginal disks and germ cells. Acts as a negative regulator of hh, ci and dpp expression in the anterior of the eye disk. Acts as a positive regulator of the canonical Wnt signaling pathway by mediating ubiquitination and degradation of gro. Catalyzes 'Lys-63'-linked polyubiquitination of akirin, thereby activating the immune deficiency pathway (Imd). The polypeptide is E3 ubiquitin-protein ligase hyd (hyd) (Drosophila melanogaster (Fruit fly)).